The chain runs to 356 residues: Probable arabinogalactan endo-beta-1,4-galactanase A (356 aa).

An N-terminal signal peptide occupies residues 1–21; that stretch reads MLGKTVLLPLLVLLCHSLASA. The N-linked (GlcNAc...) asparagine glycan is linked to asparagine 133. Glutamate 157 (proton donor) is an active-site residue. Glutamate 268 (nucleophile) is an active-site residue.

Belongs to the glycosyl hydrolase 53 family.

The protein localises to the secreted. The enzyme catalyses The enzyme specifically hydrolyzes (1-&gt;4)-beta-D-galactosidic linkages in type I arabinogalactans.. In terms of biological role, endogalactanase involved in the degradation of plant cell wall polysaccharides, and more particularly of hairy regions of pectin. The protein is Probable arabinogalactan endo-beta-1,4-galactanase A (galA) of Aspergillus fumigatus (strain CBS 144.89 / FGSC A1163 / CEA10) (Neosartorya fumigata).